Consider the following 391-residue polypeptide: MAKEKFERSKPHVNIGTIGHVDHGKTTLTAAITKYFGDFKAYDQIDGAPEEKARGITISTAHVEYETDSRHYAHVDCPGHADYVKNMITGAAQMDGAILVVNAADGPMPQTREHILLGRQVGIPFMVVYMNKVDQVDDEELLELVEMEIRELLSSYDYPGDDIPIIRGSALHAMNGTEPSMGEESIRALMAAVDEYIPTPARAVDQPFLMPIEDVFSISGRGTVVTGRVERGVINVGDSIEIVGIRDTKTTTCTGVEMFRKLLDRGEAGDNIGALLRGIDREGVERGQVLCKPGSVTPHTKFEAEAYILTKEEGGRHTPFFANYRPQFYFRTTDVTGTVTLAEGTEMVMPGDNVGFTVELIAPIAMEDGLRFAIREGGRTVGAGVVSKIIE.

Residues Lys10 to Ala201 enclose the tr-type G domain. The tract at residues Gly19 to Thr26 is G1. Position 19 to 26 (Gly19 to Thr26) interacts with GTP. Thr26 contributes to the Mg(2+) binding site. Residues Gly55 to Ser59 are G2. The G3 stretch occupies residues Asp76–Gly79. Residues Asp76–His80 and Asn131–Asp134 contribute to the GTP site. The interval Asn131 to Asp134 is G4. Residues Ser169–Leu171 are G5.

The protein belongs to the TRAFAC class translation factor GTPase superfamily. Classic translation factor GTPase family. EF-Tu/EF-1A subfamily. Monomer.

The protein localises to the cytoplasm. The catalysed reaction is GTP + H2O = GDP + phosphate + H(+). In terms of biological role, GTP hydrolase that promotes the GTP-dependent binding of aminoacyl-tRNA to the A-site of ribosomes during protein biosynthesis. The chain is Elongation factor Tu from Ruegeria pomeroyi (strain ATCC 700808 / DSM 15171 / DSS-3) (Silicibacter pomeroyi).